The primary structure comprises 147 residues: Transcription antitermination protein NusB (147 aa).

The protein belongs to the NusB family.

Its function is as follows. Involved in transcription antitermination. Required for transcription of ribosomal RNA (rRNA) genes. Binds specifically to the boxA antiterminator sequence of the ribosomal RNA (rrn) operons. The sequence is that of Transcription antitermination protein NusB from Legionella pneumophila (strain Paris).